The primary structure comprises 239 residues: MKDDVLKRQAHTAIQKKLGYAFRDMSLLRRALTHRSHHAKHNERFEFVGDSILNYTVARMLFDAFPKLTEGELSRLRASLVNEGVLAEMAAEMNVGDGLYLGAGELKSGGFRRPSILADAMEAMFAAVSFDADFNTAEKVVRHLFAERVRRADFQNQAKDGKTALQEALQARRFALPKYRIEEQIGHANDSMFVISCDLGELGFVCRAKGTSRKAAEQEAAKEALKWLEEKLPLKKKKK.

The 123-residue stretch at 11-133 folds into the RNase III domain; it reads HTAIQKKLGY…MFAAVSFDAD (123 aa). E46 contacts Mg(2+). Residue D50 is part of the active site. Mg(2+)-binding residues include D119 and E122. The active site involves E122. The 71-residue stretch at 160–230 folds into the DRBM domain; sequence DGKTALQEAL…AKEALKWLEE (71 aa).

It belongs to the ribonuclease III family. As to quaternary structure, homodimer. Mg(2+) serves as cofactor.

It is found in the cytoplasm. It carries out the reaction Endonucleolytic cleavage to 5'-phosphomonoester.. In terms of biological role, digests double-stranded RNA. Involved in the processing of primary rRNA transcript to yield the immediate precursors to the large and small rRNAs (23S and 16S). Processes some mRNAs, and tRNAs when they are encoded in the rRNA operon. Processes pre-crRNA and tracrRNA of type II CRISPR loci if present in the organism. The sequence is that of Ribonuclease 3 from Neisseria gonorrhoeae (strain NCCP11945).